The following is a 330-amino-acid chain: uncharacterized protein (330 aa).

This is an uncharacterized protein from Acanthamoeba polyphaga (Amoeba).